Consider the following 173-residue polypeptide: Large ribosomal subunit protein uL10 (173 aa).

This sequence belongs to the universal ribosomal protein uL10 family. Part of the ribosomal stalk of the 50S ribosomal subunit. The N-terminus interacts with L11 and the large rRNA to form the base of the stalk. The C-terminus forms an elongated spine to which L12 dimers bind in a sequential fashion forming a multimeric L10(L12)X complex.

Its function is as follows. Forms part of the ribosomal stalk, playing a central role in the interaction of the ribosome with GTP-bound translation factors. The chain is Large ribosomal subunit protein uL10 from Chloroherpeton thalassium (strain ATCC 35110 / GB-78).